The chain runs to 376 residues: Erythronate-4-phosphate dehydrogenase (376 aa).

Ser-45 and Thr-67 together coordinate substrate. Position 147 (Asp-147) interacts with NAD(+). Arg-209 is an active-site residue. Asp-233 provides a ligand contact to NAD(+). The active site involves Glu-238. His-255 functions as the Proton donor in the catalytic mechanism. Gly-258 is an NAD(+) binding site. A substrate-binding site is contributed by Tyr-259.

Belongs to the D-isomer specific 2-hydroxyacid dehydrogenase family. PdxB subfamily. As to quaternary structure, homodimer.

It is found in the cytoplasm. The catalysed reaction is 4-phospho-D-erythronate + NAD(+) = (R)-3-hydroxy-2-oxo-4-phosphooxybutanoate + NADH + H(+). The protein operates within cofactor biosynthesis; pyridoxine 5'-phosphate biosynthesis; pyridoxine 5'-phosphate from D-erythrose 4-phosphate: step 2/5. In terms of biological role, catalyzes the oxidation of erythronate-4-phosphate to 3-hydroxy-2-oxo-4-phosphonooxybutanoate. The chain is Erythronate-4-phosphate dehydrogenase from Shewanella loihica (strain ATCC BAA-1088 / PV-4).